Reading from the N-terminus, the 309-residue chain is Agglutinin (309 aa).

N-acetylmethionine is present on methionine 1. 2 Jacalin-type lectin domains span residues 4-148 (FLTV…YVKI) and 163-308 (PRGP…HMEY).

Belongs to the jacalin lectin family.

D-mannose/D-glucose-binding lectin. Binds N-linked high-mannose-type glycans. Has a preference for smaller (Man(2)-Man(6)) high-mannose-type glycans to larger (Man(7)-Man(9)) ones. Recognizes both alpha1-6 extended and alpha1-3 extended monoantennary glycans. The addition of alpha1-2Man to the Man-alpha1-3Man-beta branch results in a significant loss of affinity, but beta1-2GlcNAc has some affinity. Has less affinity for biantennary glycans, and affinity is very weak for the biantennary complex-type N-glycans with bisecting GlcNAc. No affinity is observed for tri- and tetra-antennary glycans. Has mitogenic and hemagglutinating activities. The protein is Agglutinin of Castanea crenata (Japanese chestnut).